Reading from the N-terminus, the 398-residue chain is Signal-regulatory protein beta-1 isoform 3 (398 aa).

Residues 1–29 form the signal peptide; it reads MPVPASWPHLPSPFLLMTLLLGRLTGVAG. Over 30–371 the chain is Extracellular; it reads EEELQVIQPD…GPALASAAPL (342 aa). One can recognise an Ig-like V-type domain in the interval 31-136; sequence EELQVIQPDK…SPDHVEFKSG (106 aa). Disulfide bonds link C54–C120 and C169–C227. Ig-like C1-type domains follow at residues 147–246 and 253–347; these read PSAP…ANLS and PTLE…HDLK. 3 N-linked (GlcNAc...) asparagine glycosylation sites follow: N244, N291, and N318. The cysteines at positions 272 and 330 are disulfide-linked. Over residues 337–354 the composition is skewed to basic and acidic residues; the sequence is QPAVSKSHDLKVSAHPKE. The segment at 337–361 is disordered; that stretch reads QPAVSKSHDLKVSAHPKEQGSNTAP. Residues 372–392 traverse the membrane as a helical segment; the sequence is LIAFLLGPKVLLVVGVSVIYV. At 393–398 the chain is on the cytoplasmic side; it reads YWKQKA.

It localises to the membrane. In terms of biological role, immunoglobulin-like cell surface receptor involved in the negative regulation of receptor tyrosine kinase-coupled signaling processes. This is Signal-regulatory protein beta-1 isoform 3 (SIRPB1) from Homo sapiens (Human).